Reading from the N-terminus, the 34-residue chain is MNWHVLAQLTVLAFVIAVGPITLIWLSNKKDALL.

Residues 5–25 (VLAQLTVLAFVIAVGPITLIW) traverse the membrane as a helical segment.

Belongs to the Psb30/Ycf12 family. PSII is composed of 1 copy each of membrane proteins PsbA, PsbB, PsbC, PsbD, PsbE, PsbF, PsbH, PsbI, PsbJ, PsbK, PsbL, PsbM, PsbT, PsbX, PsbY, PsbZ, Psb30/Ycf12, peripheral proteins of the oxygen-evolving complex and a large number of cofactors. It forms dimeric complexes.

The protein localises to the plastid. It is found in the chloroplast thylakoid membrane. A core subunit of photosystem II (PSII), probably helps stabilize the reaction center. This is Photosystem II reaction center protein Psb30 from Cyanidioschyzon merolae (strain NIES-3377 / 10D) (Unicellular red alga).